A 359-amino-acid polypeptide reads, in one-letter code: Glycerol-1-phosphate dehydrogenase [NAD(P)+] (359 aa).

Residues 107 to 111 and 129 to 132 contribute to the NAD(+) site; these read GRVID and TAAS. D134 is a binding site for substrate. S138 contributes to the NAD(+) binding site. D181 provides a ligand contact to substrate. Zn(2+) contacts are provided by D181 and H261. Position 265 (H265) interacts with substrate. H277 contacts Zn(2+).

The protein belongs to the glycerol-1-phosphate dehydrogenase family. The cofactor is Zn(2+).

It is found in the cytoplasm. It catalyses the reaction sn-glycerol 1-phosphate + NAD(+) = dihydroxyacetone phosphate + NADH + H(+). The catalysed reaction is sn-glycerol 1-phosphate + NADP(+) = dihydroxyacetone phosphate + NADPH + H(+). The protein operates within membrane lipid metabolism; glycerophospholipid metabolism. In terms of biological role, catalyzes the NAD(P)H-dependent reduction of dihydroxyacetonephosphate (DHAP or glycerone phosphate) to glycerol 1-phosphate (G1P). The G1P thus generated is used as the glycerophosphate backbone of phospholipids in the cellular membranes of Archaea. In Methanospirillum hungatei JF-1 (strain ATCC 27890 / DSM 864 / NBRC 100397 / JF-1), this protein is Glycerol-1-phosphate dehydrogenase [NAD(P)+].